A 545-amino-acid polypeptide reads, in one-letter code: CTP synthase (545 aa).

The interval 1 to 265 (MNGIKHIFIT…DKFVIKHLDL (265 aa)) is amidoligase domain. Ser15 provides a ligand contact to CTP. Residue Ser15 participates in UTP binding. Residues 16–21 (SIGKGL) and Asp73 contribute to the ATP site. The Mg(2+) site is built by Asp73 and Glu141. CTP contacts are provided by residues 148–150 (DIE), 188–193 (KTKPTQ), and Lys224. UTP contacts are provided by residues 188–193 (KTKPTQ) and Lys224. One can recognise a Glutamine amidotransferase type-1 domain in the interval 290–534 (EIAIIGKYTG…VAAALARKEI (245 aa)). Position 349 (Gly349) interacts with L-glutamine. Cys376 serves as the catalytic Nucleophile; for glutamine hydrolysis. L-glutamine is bound by residues 377 to 380 (LGMQ), Glu400, and Arg460. Residues His507 and Glu509 contribute to the active site.

This sequence belongs to the CTP synthase family. Homotetramer.

The catalysed reaction is UTP + L-glutamine + ATP + H2O = CTP + L-glutamate + ADP + phosphate + 2 H(+). The enzyme catalyses L-glutamine + H2O = L-glutamate + NH4(+). It carries out the reaction UTP + NH4(+) + ATP = CTP + ADP + phosphate + 2 H(+). It participates in pyrimidine metabolism; CTP biosynthesis via de novo pathway; CTP from UDP: step 2/2. With respect to regulation, allosterically activated by GTP, when glutamine is the substrate; GTP has no effect on the reaction when ammonia is the substrate. The allosteric effector GTP functions by stabilizing the protein conformation that binds the tetrahedral intermediate(s) formed during glutamine hydrolysis. Inhibited by the product CTP, via allosteric rather than competitive inhibition. Functionally, catalyzes the ATP-dependent amination of UTP to CTP with either L-glutamine or ammonia as the source of nitrogen. Regulates intracellular CTP levels through interactions with the four ribonucleotide triphosphates. The sequence is that of CTP synthase from Tropheryma whipplei (strain Twist) (Whipple's bacillus).